The following is a 422-amino-acid chain: Metallocarboxypeptidase A (422 aa).

The signal sequence occupies residues 1-17 (MRSVLSFALLAANVVSA). A propeptide spans 18 to 112 (AVLAPFDYSG…FEAYSAGYAP (95 aa)) (activation peptide). The Peptidase M14 domain occupies 119–419 (SYHSYQDHLS…AGTVAMLKAV (301 aa)). Zn(2+) contacts are provided by H179 and E182. Substrate-binding positions include 179 to 182 (HARE), R237, and 254 to 255 (NR). An intrachain disulfide couples C248 to C271. H309 contributes to the Zn(2+) binding site. 310 to 311 (SY) serves as a coordination point for substrate. E385 serves as the catalytic Proton donor/acceptor.

The protein belongs to the peptidase M14 family. The cofactor is Zn(2+).

The protein localises to the secreted. Its function is as follows. Extracellular metalloprotease that contributes to pathogenicity. The protein is Metallocarboxypeptidase A (MCPA) of Arthroderma otae (strain ATCC MYA-4605 / CBS 113480) (Microsporum canis).